Reading from the N-terminus, the 932-residue chain is Lipoxygenase 2.2, chloroplastic (932 aa).

Residues 79–219 (MKATVSVHMK…CSPDKRTFFP (141 aa)) form the PLAT domain. Residues 223 to 932 (SYIPSQTPKG…EMGIPNSISI (710 aa)) enclose the Lipoxygenase domain. Residues 270–284 (PESKRPVLGGKEHPY) are compositionally biased toward basic and acidic residues. Positions 270 to 311 (PESKRPVLGGKEHPYPRRCRTGRPRSKTDPSSEEESHKKGEM) are disordered. Positions 285–294 (PRRCRTGRPR) are enriched in basic residues. A compositionally biased stretch (basic and acidic residues) spans 295–311 (SKTDPSSEEESHKKGEM). The Fe cation site is built by histidine 588, histidine 593, histidine 778, asparagine 782, and isoleucine 932.

The protein belongs to the lipoxygenase family. Requires Fe cation as cofactor.

It is found in the plastid. The protein localises to the chloroplast. It catalyses the reaction (9Z,12Z)-octadecadienoate + O2 = (13S)-hydroperoxy-(9Z,11E)-octadecadienoate. The catalysed reaction is (9Z,12Z,15Z)-octadecatrienoate + O2 = (13S)-hydroperoxy-(9Z,11E,15Z)-octadecatrienoate. It functions in the pathway lipid metabolism; oxylipin biosynthesis. Its function is as follows. Plant lipoxygenase may be involved in a number of diverse aspects of plant physiology including growth and development, pest resistance, and senescence or responses to wounding. This enzyme exhibits linoleate 13-lipoxygenase activity. This is Lipoxygenase 2.2, chloroplastic (LOX2.2) from Hordeum vulgare (Barley).